Here is a 148-residue protein sequence, read N- to C-terminus: Cell division protein SepF (148 aa).

Belongs to the SepF family. As to quaternary structure, homodimer. Interacts with FtsZ.

Its subcellular location is the cytoplasm. Functionally, cell division protein that is part of the divisome complex and is recruited early to the Z-ring. Probably stimulates Z-ring formation, perhaps through the cross-linking of FtsZ protofilaments. Its function overlaps with FtsA. This Alkaliphilus metalliredigens (strain QYMF) protein is Cell division protein SepF.